The sequence spans 470 residues: Dihydrolipoyl dehydrogenase (470 aa).

FAD contacts are provided by residues 39-47 (EKGNLGGVC), K56, and A119. C47 and C52 are joined by a disulfide. Residues 183–187 (GGGYI), E206, and 271–274 (TVGR) each bind NAD(+). Residues D314 and A322 each coordinate FAD. The active-site Proton acceptor is H446.

Belongs to the class-I pyridine nucleotide-disulfide oxidoreductase family. In terms of assembly, homodimer. Identified in a complex with PdhC. FAD serves as cofactor.

The protein localises to the cytoplasm. It carries out the reaction N(6)-[(R)-dihydrolipoyl]-L-lysyl-[protein] + NAD(+) = N(6)-[(R)-lipoyl]-L-lysyl-[protein] + NADH + H(+). In terms of biological role, lipoamide dehydrogenase is a component of the alpha-ketoacid dehydrogenase complexes. The chain is Dihydrolipoyl dehydrogenase (pdhD) from Geobacillus stearothermophilus (Bacillus stearothermophilus).